The chain runs to 759 residues: DNA replication licensing factor mcm-5 (759 aa).

An MCM domain is found at 330–536 (AYELIAKSIA…KDATLAKHVI (207 aa)). An ADP-binding site is contributed by Arg370. The Arginine finger motif lies at 511 to 514 (SRFD).

The protein belongs to the MCM family. Component of the mcm2-7 complex. The complex forms a toroidal hexameric ring with the proposed subunit order mcm2-mcm6-mcm4-mcm7-mcm3-mcm5 (By simililarity).

It localises to the nucleus. It is found in the cytoplasm. Its subcellular location is the cytosol. The enzyme catalyses ATP + H2O = ADP + phosphate + H(+). Functionally, acts as a component of the MCM2-7 complex (MCM complex) which is the replicative helicase essential for 'once per cell cycle' DNA replication initiation and elongation in eukaryotic cells. Core component of CDC45-MCM-GINS (CMG) helicase, the molecular machine that unwinds template DNA during replication, and around which the replisome is built. The active ATPase sites in the MCM2-7 ring are formed through the interaction surfaces of two neighboring subunits such that a critical structure of a conserved arginine finger motif is provided in trans relative to the ATP-binding site of the Walker A box of the adjacent subunit. The six ATPase active sites, however, are likely to contribute differentially to the complex helicase activity. This is DNA replication licensing factor mcm-5 (mcm-5) from Caenorhabditis elegans.